The primary structure comprises 378 residues: Palmitoyltransferase PFA4 (378 aa).

Residues 1–9 are Cytoplasmic-facing; the sequence is MPVKLRWPW. Residues 10 to 30 form a helical membrane-spanning segment; the sequence is LGIAIPTFLISFIGYGAHYFI. The Lumenal portion of the chain corresponds to 31–40; that stretch reads LSNFLSVPKQ. A helical transmembrane segment spans residues 41–61; sequence ITFEFCLSMIWLSYYLAICTN. Over 62-119 the chain is Cytoplasmic; it reads PGRPLPNYKPPPDIWRNFCKKCQSYKPERSHHCKTCNQCVLMMDHHCPWTMNCVGFAN. The DHHC domain maps to 78–128; the sequence is NFCKKCQSYKPERSHHCKTCNQCVLMMDHHCPWTMNCVGFANYPHFLRFLF. The active-site S-palmitoyl cysteine intermediate is C108. A helical transmembrane segment spans residues 120 to 140; it reads YPHFLRFLFWIIVTTSVLFCI. Residues 141 to 164 are Lumenal-facing; the sequence is QAKRIYFIWQQRHLPGYFFKKSEL. Residues 165 to 185 traverse the membrane as a helical segment; that stretch reads IFLTISSPLNSFVLLTITILF. Residues 186–378 lie on the Cytoplasmic side of the membrane; it reads LRCLFNQILN…DDFGVDVDME (193 aa).

It belongs to the DHHC palmitoyltransferase family. PFA4 subfamily. In terms of processing, autopalmitoylated.

Its subcellular location is the endoplasmic reticulum membrane. The enzyme catalyses L-cysteinyl-[protein] + hexadecanoyl-CoA = S-hexadecanoyl-L-cysteinyl-[protein] + CoA. Functionally, mediates the reversible addition of palmitate to target proteins, thereby regulating their membrane association and biological function. Palmitoylates several amino acid permeases. Palmitoylates chitin synthase CHS3, which is required for its proper export from the ER. Can palmitoylate RAS2 in vitro. The protein is Palmitoyltransferase PFA4 of Saccharomyces cerevisiae (strain ATCC 204508 / S288c) (Baker's yeast).